A 362-amino-acid chain; its full sequence is MKESIKLKLESLSDRYDELAALLGVAEVIMDQDLFRAYSKEYAELEPVVKCFNEFQQIDENIAEAELMMTDADPDIKEMGVEEYKAGLAQKEELQLVLQKLLLPKDPNDSRNVFLEVRAGTGGDEASIFSGDLFRMYSRYAETQRWKVEIVSASDGEHGGYKEVIARIVGEGAYSKLKFESGAHRVQRVPATESQGRIHTSACTVAVMPEMDEVDDIIINKSDLRIDTFRASGAGGQHVNKTDSAIRLTHIPTGVVVECQEERSQHKNRAKAMSLLASRLQAAELEKAASEQSETRKSLVGSGDRSERIRTYNYPQGRVTDHRINLTLYKLDEIVAGELDSLINPLVNEFQAEQLAALSGDN.

Position 237 is an N5-methylglutamine (Gln237).

This sequence belongs to the prokaryotic/mitochondrial release factor family. In terms of processing, methylated by PrmC. Methylation increases the termination efficiency of RF1.

The protein resides in the cytoplasm. In terms of biological role, peptide chain release factor 1 directs the termination of translation in response to the peptide chain termination codons UAG and UAA. In Marinomonas sp. (strain MWYL1), this protein is Peptide chain release factor 1.